We begin with the raw amino-acid sequence, 374 residues long: Formylglycine-generating enzyme (374 aa).

The signal sequence occupies residues 1 to 33 (MAAPALGPARGCGAELTLVLLLSLFLLLGWAAG). Cysteines 50 and 52 form a disulfide. The segment at 57–102 (RPGAQGSSAAAHRYSREANAPGSVPGGRPSPPTKMVPIPAGVFTMG) is disordered. A Ca(2+)-binding site is contributed by Glu-130. An N-linked (GlcNAc...) asparagine glycan is attached at Asn-141. Cystine bridges form between Cys-218–Cys-365 and Cys-235–Cys-346. Residues Asn-259, Ile-260, Asp-273, Phe-275, Asn-293, Gly-296, Ala-298, and Glu-300 each contribute to the Ca(2+) site. Residues Cys-336 and Cys-341 each coordinate Cu(2+). An interaction with sulfatases region spans residues 341–360 (CYRYRCAARSQNTPDSSASN).

Belongs to the sulfatase-modifying factor family. As to quaternary structure, monomer, homodimer and heterodimer with SUMF2. Requires Cu(2+) as cofactor. Post-translationally, N-glycosylated. Contains high-mannose-type oligosaccharides.

The protein resides in the endoplasmic reticulum lumen. It carries out the reaction L-cysteinyl-[sulfatase] + 2 a thiol + O2 = an organic disulfide + 3-oxo-L-alanyl-[sulfatase] + hydrogen sulfide + H2O + H(+). It participates in protein modification; sulfatase oxidation. In terms of biological role, oxidase that catalyzes the conversion of cysteine to 3-oxoalanine on target proteins, using molecular oxygen and an unidentified reducing agent. 3-oxoalanine modification, which is also named formylglycine (fGly), occurs in the maturation of arylsulfatases and some alkaline phosphatases that use the hydrated form of 3-oxoalanine as a catalytic nucleophile. Known substrates include GALNS, ARSA, STS and ARSE. This chain is Formylglycine-generating enzyme, found in Bos taurus (Bovine).